A 129-amino-acid polypeptide reads, in one-letter code: Venom CUB domain-containing protein 1 (129 aa).

Residues 1–18 form the signal peptide; it reads MKLLGVLITIYCIASTLA. The 103-residue stretch at 19-121 folds into the CUB domain; sequence IDVNVPSNGM…KASCKAYSIT (103 aa). A disulfide bridge links cysteine 66 with cysteine 83.

The protein belongs to the venom CUB family. Post-translationally, contains 2 disulfide bonds. Expressed by the venom gland.

Its subcellular location is the secreted. This chain is Venom CUB domain-containing protein 1, found in Platymeris rhadamanthus (Red spot assassin bug).